The primary structure comprises 216 residues: Probable GTP-binding protein EngB (216 aa).

An EngB-type G domain is found at 37 to 214; it reads DGLEVAFAGR…RAAMIRLLDE (178 aa). Residues 45 to 52, 72 to 76, 92 to 95, 159 to 162, and 193 to 195 each bind GTP; these read GRSNVGKS, GRTQE, DMPG, TKAD, and TSS. Positions 52 and 74 each coordinate Mg(2+).

The protein belongs to the TRAFAC class TrmE-Era-EngA-EngB-Septin-like GTPase superfamily. EngB GTPase family. It depends on Mg(2+) as a cofactor.

Functionally, necessary for normal cell division and for the maintenance of normal septation. This Rhodopseudomonas palustris (strain HaA2) protein is Probable GTP-binding protein EngB.